The following is a 217-amino-acid chain: GRB2-related adapter protein (217 aa).

One can recognise an SH3 1 domain in the interval 1–58; it reads MESVALYSFQATESDELAFNKGDTLKILNMEDDQNWYKAELRGVEGFIPKNYIRVKPH. The region spanning 60–154 is the SH2 domain; sequence WYSGRISRQL…QIFLRDEEPL (95 aa). Positions 158 to 217 constitute an SH3 2 domain; it reads PGACFAQAQFDFSAQDPSQLSFRRGDIIEVLERPDPHWWRGRSCGRVGFFPRSYVQPVHL.

It belongs to the GRB2/sem-5/DRK family. As to quaternary structure, associates through its SH2 domain with ligand-activated receptors for stem cell factor (KIT) and erythropoietin (EPOR). Also forms a stable complex with the Bcr-Abl oncoprotein. GRAP is associated with the Ras guanine nucleotide exchange factor SOS1, primarily through its N-terminal SH3 domain. Interacts with phosphorylated LAT upon TCR activation. Interacts with SHB.

It is found in the membrane. Its subcellular location is the synapse. In terms of biological role, couples signals from receptor and cytoplasmic tyrosine kinases to the Ras signaling pathway. Plays a role in the inner ear and in hearing. The sequence is that of GRB2-related adapter protein from Homo sapiens (Human).